The sequence spans 453 residues: Presenilin-like protein At1g08700 (453 aa).

Over 1–8 (MESSILDS) the chain is Cytoplasmic. The helical transmembrane segment at 9 to 29 (LGVEIIGVMAPVSICMFLVVL) threads the bilayer. Over 30–68 (LTYSLSVTSDPQIRSAANLIYIENPSDSTTVKLEGSLAN) the chain is Lumenal. Residues 69-89 (AIVFVVLIAAVTFILVLLFYY) form a helical membrane-spanning segment. Residues 90-103 (NFTNFLKHYMRFSA) are Cytoplasmic-facing. Residues 104–124 (FFVLGTMGGAIFLSIIQHFSI) form a helical membrane-spanning segment. At 125-132 (PVDSITCF) the chain is on the lumenal side. Residues 133–153 (ILLFNFTILGTLSVFAGGIPI) form a helical membrane-spanning segment. Topologically, residues 154–159 (VLRQCY) are cytoplasmic. 2 helical membrane-spanning segments follow: residues 160 to 180 (MVVMGIVVAAWFTKLPEWTTW) and 181 to 201 (FILVALALYDLVAVLAPGGPL). The active site involves D190. The Cytoplasmic segment spans residues 202-369 (KLLVELASSR…VVDISNRGIK (168 aa)). Disordered stretches follow at residues 226–248 (VSSGNQRRNRGSSLRALVGGGGV) and 292–329 (IGNGSRGGLERSPLVGSPSASEHSTSVGTRGNMEDRES). A compositionally biased stretch (low complexity) spans 227–240 (SSGNQRRNRGSSLR). S296 is modified (phosphoserine). Residues 309–320 (PSASEHSTSVGT) are compositionally biased toward polar residues. The helical transmembrane segment at 370–390 (LGLGDFIFYSVLVGRAAMYDL) threads the bilayer. D374 is a catalytic residue. Over 391-392 (MT) the chain is Lumenal. The helical transmembrane segment at 393–413 (VYACYLAIISGLGCTLILLSV) threads the bilayer. At 414–417 (YNRA) the chain is on the cytoplasmic side. Residues 418–438 (LPALPISIMLGVVFYFLTRLL) constitute an intramembrane region (helical). Residues 419–421 (PAL) carry the PAL motif. The Cytoplasmic segment spans residues 439-453 (MEPFVVGVTTNLMMF).

This sequence belongs to the peptidase A22A family. Homodimer. Probable component of the gamma-secretase complex, a complex composed of a presenilin homodimer, nicastrin, APH1 and PEN2.

The protein localises to the endoplasmic reticulum membrane. The protein resides in the golgi apparatus membrane. Functionally, probable subunit of the gamma-secretase complex, an endoprotease complex that catalyzes the intramembrane cleavage of integral membrane proteins such as Notch receptors. This Arabidopsis thaliana (Mouse-ear cress) protein is Presenilin-like protein At1g08700.